Here is a 434-residue protein sequence, read N- to C-terminus: Putative F-box/FBD/LRR-repeat protein At1g16940 (434 aa).

The F-box domain occupies 10–66; sequence HNIINQLPDSLLCEIFFNLPTEEVVKTSLICRRWRYVWQSLPGLDLVINGSKNYDKF. 6 LRR repeats span residues 72-99, 114-141, 164-189, 204-231, 252-277, and 306-331; these read FMFL…MMNN, RRYV…KLHR, INFV…TMDK, CLTN…KLNR, DVAY…TISF, and MAVG…VMGF. An FBD domain is found at 336–385; sequence WGINFSDVPQCVLSSLEFVEVKAREVADMKKLWSYFMENSTVLKKFTLCL.

The protein is Putative F-box/FBD/LRR-repeat protein At1g16940 of Arabidopsis thaliana (Mouse-ear cress).